Consider the following 305-residue polypeptide: 2-aminophenol 1,6-dioxygenase beta subunit (305 aa).

3 residues coordinate Fe cation: His14, His63, and His196.

Belongs to the LigB/MhpB extradiol dioxygenase family. Heterotetramer of 2 alpha and 2 beta subunits. Requires Fe(2+) as cofactor.

It carries out the reaction 2-aminophenol + O2 = 2-aminomuconate 6-semialdehyde. With respect to regulation, strongly inhibited by CuSO(4), FeCl(3), K(3)[Fe(CN)(6)], AgNO3, HgCl(2) and MnCl(2). Its function is as follows. Component of the 2-aminophenol 1,6-dioxygenase complex that catalyzes the ring fission of 2-aminophenol to produce 2-aminomuconic 6-semialdehyde. AmnB seems to be the catalytic subunit of the complex. The enzyme is also active toward 2-amino-p-cresol, 6-amino-m-cresol, 2-amino-m-cresol, 2-amino-4,5-dimethylphenol, 2-amino-4-chlorophenol, and catechol. The protein is 2-aminophenol 1,6-dioxygenase beta subunit (amnB) of Pseudomonas sp.